Here is a 528-residue protein sequence, read N- to C-terminus: GMP synthase [glutamine-hydrolyzing] (528 aa).

A Glutamine amidotransferase type-1 domain is found at 13-204; sequence SILILDFGSQ…VYGISSCVAD (192 aa). The active-site Nucleophile is the cysteine 90. Active-site residues include histidine 178 and glutamate 180. Residues 205 to 403 form the GMPS ATP-PPase domain; sequence WTTETYIEET…LGLPDEIIKR (199 aa). Position 232–238 (232–238) interacts with ATP; that stretch reads SGGVDSS.

Homodimer.

It carries out the reaction XMP + L-glutamine + ATP + H2O = GMP + L-glutamate + AMP + diphosphate + 2 H(+). The protein operates within purine metabolism; GMP biosynthesis; GMP from XMP (L-Gln route): step 1/1. Its function is as follows. Catalyzes the synthesis of GMP from XMP. This is GMP synthase [glutamine-hydrolyzing] from Prochlorococcus marinus (strain MIT 9312).